Reading from the N-terminus, the 712-residue chain is 1,4-alpha-glucan branching enzyme GlgB (712 aa).

Asp-397 serves as the catalytic Nucleophile. Glu-450 acts as the Proton donor in catalysis.

This sequence belongs to the glycosyl hydrolase 13 family. GlgB subfamily. As to quaternary structure, monomer.

It catalyses the reaction Transfers a segment of a (1-&gt;4)-alpha-D-glucan chain to a primary hydroxy group in a similar glucan chain.. It functions in the pathway glycan biosynthesis; glycogen biosynthesis. Catalyzes the formation of the alpha-1,6-glucosidic linkages in glycogen by scission of a 1,4-alpha-linked oligosaccharide from growing alpha-1,4-glucan chains and the subsequent attachment of the oligosaccharide to the alpha-1,6 position. The polypeptide is 1,4-alpha-glucan branching enzyme GlgB (Bradyrhizobium sp. (strain ORS 278)).